We begin with the raw amino-acid sequence, 440 residues long: MKLWGGRFKEEESKLMEDFNSSLSFDKKLYYEDIKGSIAHVKMLVNQDIIKEEEKEKILLGLEGILKEIDGGILKIEGDYEDIHSFVEINLINKIGDVGKKLHTGRSRNDQVALDMKLYAKKSTEEVIECLKGLMDSLIKVGNENNYIMPGYTHLQRAQVVTFRYHLLAYFEMFKRDEKRLKNALEILNESPLGSGALAGSTYNIDREYTAKLLGFRKPVDNFLDGVSDRDYIIELISKFSIIMMHLSRLSEELILWSSSEFRFIQIGDAYSTGSSIMPQKKNPDGAELIRGKTGRVYGDLISILTVMKSLPLAYNKDMQEDKEPFFDAKDTVISCLKVMEGIISTLKVNKENLMKSVKKGFLNATEAADYLVNKGMAFRDAHKVIGEIVIYCEDKNSAIEDLSLEELKQFSDLFCEDIYEFIDYKNSINKGIKKEMGYF.

It belongs to the lyase 1 family. Argininosuccinate lyase subfamily.

It is found in the cytoplasm. The enzyme catalyses 2-(N(omega)-L-arginino)succinate = fumarate + L-arginine. It participates in amino-acid biosynthesis; L-arginine biosynthesis; L-arginine from L-ornithine and carbamoyl phosphate: step 3/3. In Clostridium botulinum (strain Loch Maree / Type A3), this protein is Argininosuccinate lyase.